Consider the following 763-residue polypeptide: Polyribonucleotide nucleotidyltransferase (763 aa).

Positions 526 and 532 each coordinate Mg(2+). Residues 592 to 651 (PRITTIKVPVDKIGEVIGPKGKMINSITEETGAQISIEDDGTVFVGAADGLSAQAAIDKI) enclose the KH domain. Residues 663-732 (GERFLGTVVK…NRGKISLVLV (70 aa)) form the S1 motif domain. The tract at residues 739 to 763 (SAESAGDKGAEKAEGAAADVTPAEA) is disordered. The span at 743-752 (AGDKGAEKAE) shows a compositional bias: basic and acidic residues.

This sequence belongs to the polyribonucleotide nucleotidyltransferase family. Mg(2+) serves as cofactor.

It is found in the cytoplasm. It catalyses the reaction RNA(n+1) + phosphate = RNA(n) + a ribonucleoside 5'-diphosphate. Its function is as follows. Involved in mRNA degradation. Catalyzes the phosphorolysis of single-stranded polyribonucleotides processively in the 3'- to 5'-direction. In Mycolicibacterium smegmatis (strain ATCC 700084 / mc(2)155) (Mycobacterium smegmatis), this protein is Polyribonucleotide nucleotidyltransferase.